We begin with the raw amino-acid sequence, 612 residues long: UvrABC system protein C (612 aa).

One can recognise a GIY-YIG domain in the interval 20–98 (THSGVYRMLD…IKQHRPKYNI (79 aa)). The UVR domain occupies 208–243 (SSVLEEISAKMYQASEDMEYEKAQVYRDQLVVLRKL).

This sequence belongs to the UvrC family. As to quaternary structure, interacts with UvrB in an incision complex.

The protein localises to the cytoplasm. Functionally, the UvrABC repair system catalyzes the recognition and processing of DNA lesions. UvrC both incises the 5' and 3' sides of the lesion. The N-terminal half is responsible for the 3' incision and the C-terminal half is responsible for the 5' incision. This chain is UvrABC system protein C, found in Francisella tularensis subsp. tularensis (strain WY96-3418).